Reading from the N-terminus, the 65-residue chain is Kappa-scoloptoxin(04)-Ssd1a (65 aa).

The signal sequence occupies residues 1 to 24; that stretch reads MKKTCVVSVFLVLLLLKFHDLSMG. Residues 25–36 constitute a propeptide that is removed on maturation; the sequence is EEISPLKKVAPR. Disulfide bonds link Cys-42/Cys-53 and Cys-47/Cys-60.

Expressed by the venom gland.

It is found in the secreted. In terms of biological role, voltage-gated potassium channel inhibitor. The polypeptide is Kappa-scoloptoxin(04)-Ssd1a (Scolopendra dehaani (Thai centipede)).